The sequence spans 326 residues: Pyruvate dehydrogenase E1 component subunit alpha (326 aa).

As to quaternary structure, heterodimer of an alpha and a beta chain. Thiamine diphosphate is required as a cofactor.

It carries out the reaction N(6)-[(R)-lipoyl]-L-lysyl-[protein] + pyruvate + H(+) = N(6)-[(R)-S(8)-acetyldihydrolipoyl]-L-lysyl-[protein] + CO2. In terms of biological role, the pyruvate dehydrogenase complex catalyzes the overall conversion of pyruvate to acetyl-CoA and CO(2). It contains multiple copies of three enzymatic components: pyruvate dehydrogenase (E1), dihydrolipoamide acetyltransferase (E2) and lipoamide dehydrogenase (E3). This Rickettsia prowazekii (strain Madrid E) protein is Pyruvate dehydrogenase E1 component subunit alpha (pdhA).